An 876-amino-acid polypeptide reads, in one-letter code: MKSSEIRSAFLKYFQRNGHEVVASSSLVPADDPTLLFTNAGMNQFKDVFLGKDKRNYDRATTSQKCVRAGGKHNDLENVGYTARHHTFFEMLGNFSFGDYFKREAINYAWEFLTSSDWLNIDKSKLTVTVYASDDESFDIWANEIGVPEERIIRIGDNKGAPYASDNFWQMGDTGPCGPCTEIFYDHGPHIAGGPPGSPDEDGDRFIEIWNVVFMQFNRTADGEMHPLPKPSVDTGMGLERISALMQGVHSNYEIDLFQELLAEASKVLGGASIEEPALRVIADHIRSSSFLIADGVLPENIGRGSVLRRIIRRAARYGNKVGATEPFLHKLVGKLVELMGDAYPELKASQNKIEKTLLLEEEQFAKTLDKGLKLLEHELEQLKGMTIPGKTIFTLYDTYGFPVELTNDIARERSLAMDMDGYEVEMEAQRKRAREAGSFGVDYNAGLNIDVSSEFTGYTELAGSYKALALFAGSDKADALTVGQQGLVVLDKTPFYAESGGQVGDTGVLKTDTGVFVVKDTKKEGAAIVHIGAVSEGEIKVGQTVTAEVDRHKRKATALNHSATHLLHAALRKVLGDHVAQKGSLVDPERLRFDFAHFEPMTQEQIRQVESIVNAQIRANTSVSTEVMGMDAARERGAMALFGEKYGDTVRVLAMGESDFSIELCGGTHVERTGDIGMFVIASEAGTAAGVRRIEALTGQPAENWVQSSDALLRDIAVLVKGNRETAADKVRALIERSRQLEKEVDQVKAKLASSAGSDLAASAVDVKGLKVLAAKLDGVDRKALMDTVDQLKNKLGQAVVLLASVEDGKASIVAGVTKAESAKVKAGDLVKMVAEQLGGKGGGRPDMAQGGGVELGKLDAALASVNAWVEGQLG.

Zn(2+)-binding residues include His562, His566, Cys666, and His670.

Belongs to the class-II aminoacyl-tRNA synthetase family. The cofactor is Zn(2+).

Its subcellular location is the cytoplasm. It catalyses the reaction tRNA(Ala) + L-alanine + ATP = L-alanyl-tRNA(Ala) + AMP + diphosphate. In terms of biological role, catalyzes the attachment of alanine to tRNA(Ala) in a two-step reaction: alanine is first activated by ATP to form Ala-AMP and then transferred to the acceptor end of tRNA(Ala). Also edits incorrectly charged Ser-tRNA(Ala) and Gly-tRNA(Ala) via its editing domain. This is Alanine--tRNA ligase from Hahella chejuensis (strain KCTC 2396).